Here is a 155-residue protein sequence, read N- to C-terminus: Histone H3-like 3 (155 aa).

The interval 34-59 (IGVKLPNSYRPGDQTVCKPAPPTDGV) is disordered.

This sequence belongs to the histone H3 family. In terms of assembly, the nucleosome is a histone octamer containing two molecules each of H2A, H2B, H3 and H4 assembled in one H3-H4 heterotetramer and two H2A-H2B heterodimers. The octamer wraps approximately 147 bp of DNA. Pollen specific.

The protein localises to the nucleus. Its subcellular location is the chromosome. Core component of nucleosome. Nucleosomes wrap and compact DNA into chromatin, limiting DNA accessibility to the cellular machineries which require DNA as a template. Histones thereby play a central role in transcription regulation, DNA repair, DNA replication and chromosomal stability. DNA accessibility is regulated via a complex set of post-translational modifications of histones, also called histone code, and nucleosome remodeling. This Lilium longiflorum (Trumpet lily) protein is Histone H3-like 3 (leH3).